Reading from the N-terminus, the 175-residue chain is Large ribosomal subunit protein uL6 (175 aa).

The protein belongs to the universal ribosomal protein uL6 family. As to quaternary structure, part of the 50S ribosomal subunit.

In terms of biological role, this protein binds to the 23S rRNA, and is important in its secondary structure. It is located near the subunit interface in the base of the L7/L12 stalk, and near the tRNA binding site of the peptidyltransferase center. This is Large ribosomal subunit protein uL6 from Xanthomonas axonopodis pv. citri (strain 306).